Here is a 144-residue protein sequence, read N- to C-terminus: Universal stress protein A (144 aa).

Belongs to the universal stress protein A family. Homodimer.

Its subcellular location is the cytoplasm. Required for resistance to DNA-damaging agents. In Salmonella typhimurium (strain LT2 / SGSC1412 / ATCC 700720), this protein is Universal stress protein A (uspA).